The primary structure comprises 281 residues: uncharacterized protein (281 aa).

Residues 242 to 281 (IDKQSRKKNIIREINDIKSKINDLSNYMDNLISELDDLFD) are a coiled coil.

This is an uncharacterized protein from Acanthamoeba polyphaga (Amoeba).